We begin with the raw amino-acid sequence, 649 residues long: Phosphomethylpyrimidine synthase (649 aa).

Residues Asn-235, Met-264, Tyr-293, His-329, 349 to 351 (SRG), 390 to 393 (DGLR), and Glu-429 contribute to the substrate site. His-433 is a binding site for Zn(2+). Substrate is bound at residue Tyr-456. A Zn(2+)-binding site is contributed by His-497. The [4Fe-4S] cluster site is built by Cys-577, Cys-580, and Cys-585. The tract at residues 620 to 649 (GMRQKSQEFRDTGSELYHPAVGAKEAQLEE) is disordered. Positions 621–632 (MRQKSQEFRDTG) are enriched in basic and acidic residues.

The protein belongs to the ThiC family. Homodimer. It depends on [4Fe-4S] cluster as a cofactor.

The enzyme catalyses 5-amino-1-(5-phospho-beta-D-ribosyl)imidazole + S-adenosyl-L-methionine = 4-amino-2-methyl-5-(phosphooxymethyl)pyrimidine + CO + 5'-deoxyadenosine + formate + L-methionine + 3 H(+). It functions in the pathway cofactor biosynthesis; thiamine diphosphate biosynthesis. Catalyzes the synthesis of the hydroxymethylpyrimidine phosphate (HMP-P) moiety of thiamine from aminoimidazole ribotide (AIR) in a radical S-adenosyl-L-methionine (SAM)-dependent reaction. The polypeptide is Phosphomethylpyrimidine synthase (Vibrio atlanticus (strain LGP32) (Vibrio splendidus (strain Mel32))).